Reading from the N-terminus, the 661-residue chain is Zeaxanthin epoxidase, chloroplastic (661 aa).

Residues 1 to 59 constitute a chloroplast transit peptide; it reads MLLFRATLLPSPPFFHKTYFSHLSPVIFSDDPLPVSLQRNRVSGCRKQKWRQIRTLALQ. FAD contacts are provided by residues 81-109 and 359-372; these read RILI…LVFE and IFTW…LLGD. Residues 555–609 form the FHA domain; the sequence is HIIGSISHDDSEGISIHLPFPQVHKTHARIACKDNIFYLTDLQSQYGTWITDNEG.

Requires FAD as cofactor. In terms of tissue distribution, expressed in flower buds, lips and leaves. Detected in roots.

The protein localises to the plastid. It is found in the chloroplast. The enzyme catalyses all-trans-zeaxanthin + 4 reduced [2Fe-2S]-[ferredoxin] + 2 O2 + 4 H(+) = all-trans-violaxanthin + 4 oxidized [2Fe-2S]-[ferredoxin] + 2 H2O. It functions in the pathway plant hormone biosynthesis; abscisate biosynthesis. In terms of biological role, zeaxanthin epoxidase that plays an important role in the xanthophyll cycle and abscisic acid (ABA) biosynthesis. Converts zeaxanthin into antheraxanthin and subsequently violaxanthin. This chain is Zeaxanthin epoxidase, chloroplastic (ZEP), found in Oncidium hybrid cultivar (Orchid).